The following is a 525-amino-acid chain: Ent-kaurene oxidase (525 aa).

Residues 31 to 51 (VHWLIYVAFGAWLCSYVIHVL) form a helical membrane-spanning segment. Position 466 (C466) interacts with heme.

Belongs to the cytochrome P450 family. The cofactor is heme.

It localises to the membrane. The enzyme catalyses ent-kaur-16-ene + 3 reduced [NADPH--hemoprotein reductase] + 3 O2 = ent-kaur-16-en-19-oate + 3 oxidized [NADPH--hemoprotein reductase] + 4 H2O + 4 H(+). It functions in the pathway plant hormone biosynthesis; gibberellin biosynthesis. Catalyzes three successive oxidations of the 4-methyl group of ent-kaurene giving kaurenoic acid, a key step in gibberellin (GA) biosynthesis. The polypeptide is Ent-kaurene oxidase (CYP503A1) (Fusarium fujikuroi (Bakanae and foot rot disease fungus)).